The chain runs to 85 residues: Metallothionein-like protein 4B (85 aa).

The segment at 1–20 (MADTGKGSASASCNDRCGCP) is disordered.

This sequence belongs to the metallothionein superfamily. Type 15 family. As to expression, expressed specifically in seeds.

The protein resides in the cytoplasm. The protein localises to the nucleus. Its subcellular location is the cell membrane. Metallothioneins have a high content of cysteine residues that bind various heavy metals. Functions as a metal chelator of copper (Cu) and zinc (Zn). Plays a role in storing and distributing Zn ion in seed. This chain is Metallothionein-like protein 4B (MT4B), found in Arabidopsis thaliana (Mouse-ear cress).